A 116-amino-acid chain; its full sequence is Cation channel sperm-associated auxiliary subunit TMEM262 (116 aa).

Residues 1 to 16 (MRWRDRIAVLCFPPGL) are Cytoplasmic-facing. The helical transmembrane segment at 17–38 (MLTVAALILFFIHMGVFASDVH) threads the bilayer. Residues 39-51 (NFCVIHNYDHMSF) are Extracellular-facing. A helical transmembrane segment spans residues 52–72 (RYTVVLIFSQVISIGWAAMGS). Topologically, residues 73 to 84 (LYAEMTGDKFLR) are cytoplasmic. The helical transmembrane segment at 85 to 107 (CFALTILILNGAMFFNRLCLEFL) threads the bilayer. The Extracellular segment spans residues 108–116 (AINYREERH).

Component of the CatSper complex or CatSpermasome composed of the core pore-forming members CATSPER1, CATSPER2, CATSPER3 and CATSPER4 as well as auxiliary members CATSPERB, CATSPERG, CATSPERD, CATSPERE, CATSPERZ, C2CD6/CATSPERT, SLCO6C1, TMEM249, TMEM262 and EFCAB9. HSPA1 may be an additional auxiliary complex member. The core complex members CATSPER1, CATSPER2, CATSPER3 and CATSPER4 form a heterotetrameric channel. The auxiliary CATSPERB, CATSPERG2, CATSPERD and CATSPERE subunits form a pavilion-like structure over the pore which stabilizes the complex through interactions with CATSPER4, CATSPER3, CATSPER1 and CATSPER2 respectively. SLCO6C1 interacts with CATSPERE and TMEM262/CATSPERH interacts with CATSPERB, further stabilizing the complex. C2CD6/CATSPERT interacts at least with CATSPERD and is required for targeting the CatSper complex in the flagellar membrane.

It is found in the cell projection. The protein localises to the cilium. It localises to the flagellum membrane. Its function is as follows. Auxiliary component of the CatSper complex, a complex involved in sperm cell hyperactivation. The protein is Cation channel sperm-associated auxiliary subunit TMEM262 of Mus musculus (Mouse).